The following is an 81-amino-acid chain: MDPLVSAASVLAAALAVGLAAIGPGIGQGNAAGQAVEGIARQPEAEGKIRGTLLLSLAFMEALTIYGLVVALVLLFANPFA.

2 consecutive transmembrane segments (helical) span residues 7-27 and 57-77; these read AASV…PGIG and LAFM…LLFA.

It belongs to the ATPase C chain family. F-type ATPases have 2 components, F(1) - the catalytic core - and F(0) - the membrane proton channel. F(1) has five subunits: alpha(3), beta(3), gamma(1), delta(1), epsilon(1). F(0) has four main subunits: a(1), b(1), b'(1) and c(10-14). The alpha and beta chains form an alternating ring which encloses part of the gamma chain. F(1) is attached to F(0) by a central stalk formed by the gamma and epsilon chains, while a peripheral stalk is formed by the delta, b and b' chains.

It is found in the cellular thylakoid membrane. Functionally, f(1)F(0) ATP synthase produces ATP from ADP in the presence of a proton or sodium gradient. F-type ATPases consist of two structural domains, F(1) containing the extramembraneous catalytic core and F(0) containing the membrane proton channel, linked together by a central stalk and a peripheral stalk. During catalysis, ATP synthesis in the catalytic domain of F(1) is coupled via a rotary mechanism of the central stalk subunits to proton translocation. Its function is as follows. Key component of the F(0) channel; it plays a direct role in translocation across the membrane. A homomeric c-ring of between 10-14 subunits forms the central stalk rotor element with the F(1) delta and epsilon subunits. In Nostoc sp. (strain PCC 7120 / SAG 25.82 / UTEX 2576), this protein is ATP synthase subunit c.